The chain runs to 292 residues: Homoserine kinase (292 aa).

84-94 (PLSRGLGSSSA) lines the ATP pocket.

Belongs to the GHMP kinase family. Homoserine kinase subfamily.

Its subcellular location is the cytoplasm. It carries out the reaction L-homoserine + ATP = O-phospho-L-homoserine + ADP + H(+). It participates in amino-acid biosynthesis; L-threonine biosynthesis; L-threonine from L-aspartate: step 4/5. In terms of biological role, catalyzes the ATP-dependent phosphorylation of L-homoserine to L-homoserine phosphate. In Campylobacter jejuni subsp. doylei (strain ATCC BAA-1458 / RM4099 / 269.97), this protein is Homoserine kinase.